The sequence spans 122 residues: Aspartate 1-decarboxylase (122 aa).

Ser-25 serves as the catalytic Schiff-base intermediate with substrate; via pyruvic acid. Ser-25 is modified (pyruvic acid (Ser)). Thr-57 contributes to the substrate binding site. Catalysis depends on Tyr-58, which acts as the Proton donor. Gly-73–Ala-75 serves as a coordination point for substrate.

The protein belongs to the PanD family. As to quaternary structure, heterooctamer of four alpha and four beta subunits. The cofactor is pyruvate. Is synthesized initially as an inactive proenzyme, which is activated by self-cleavage at a specific serine bond to produce a beta-subunit with a hydroxyl group at its C-terminus and an alpha-subunit with a pyruvoyl group at its N-terminus.

The protein localises to the cytoplasm. It carries out the reaction L-aspartate + H(+) = beta-alanine + CO2. The protein operates within cofactor biosynthesis; (R)-pantothenate biosynthesis; beta-alanine from L-aspartate: step 1/1. Its function is as follows. Catalyzes the pyruvoyl-dependent decarboxylation of aspartate to produce beta-alanine. In Bordetella parapertussis (strain 12822 / ATCC BAA-587 / NCTC 13253), this protein is Aspartate 1-decarboxylase.